A 382-amino-acid chain; its full sequence is PqqA peptide cyclase (382 aa).

A Radical SAM core domain is found at 8–223; it reads VKPPLWLLAE…VHRYREKMAA (216 aa). Residues Cys-22, Cys-26, and Cys-29 each coordinate [4Fe-4S] cluster.

This sequence belongs to the radical SAM superfamily. PqqE family. Interacts with PqqD. The interaction is necessary for activity of PqqE. It depends on [4Fe-4S] cluster as a cofactor.

It carries out the reaction [PQQ precursor protein] + S-adenosyl-L-methionine = E-Y cross-linked-[PQQ precursor protein] + 5'-deoxyadenosine + L-methionine + H(+). Its pathway is cofactor biosynthesis; pyrroloquinoline quinone biosynthesis. Its function is as follows. Catalyzes the cross-linking of a glutamate residue and a tyrosine residue in the PqqA protein as part of the biosynthesis of pyrroloquinoline quinone (PQQ). This chain is PqqA peptide cyclase, found in Erwinia tasmaniensis (strain DSM 17950 / CFBP 7177 / CIP 109463 / NCPPB 4357 / Et1/99).